Consider the following 347-residue polypeptide: NHL repeat-containing protein 3 (347 aa).

A signal peptide spans 1–25 (MARFWVCVAGAGFFLAFLVLHSRFC). N-linked (GlcNAc...) asparagine glycosylation occurs at asparagine 32. Residues 47 to 93 (RLDVGWPKHPEYFTGTTFCVAVDSLNGLVYIGQRGDNIPKILVFTED) form an NHL 1 repeat. Asparagine 101 is a glycosylation site (N-linked (GlcNAc...) asparagine). NHL repeat units follow at residues 150-196 (TPGK…LSQD) and 200-243 (LWLH…FDKD). 2 N-linked (GlcNAc...) asparagine glycosylation sites follow: asparagine 206 and asparagine 278. An NHL 4 repeat occupies 294 to 338 (GECSVISTIQLADQVLPHLLEVDRKTGAVYVAEIGAKQVQKYVPL).

Its subcellular location is the secreted. The chain is NHL repeat-containing protein 3 (NHLRC3) from Homo sapiens (Human).